A 528-amino-acid chain; its full sequence is Oxamate amidohydrolase proenzyme (528 aa).

Thr342 (nucleophile) is an active-site residue. Residue 424–425 (GG) participates in substrate binding.

This sequence belongs to the gamma-glutamyltransferase family. As to quaternary structure, heterodimer that consists of a 35.5 kDa large (alpha) subunit and a 20 kDa small (beta) subunit, which are synthesized from a single polypeptide. In terms of processing, cleaved by autocatalysis into a large (alpha) and a small (beta) subunit.

The catalysed reaction is oxamate + H2O = oxalate + NH4(+). Involved in the uric acid degradation pathway. Catalyzes the conversion of oxamate to oxalate. The sequence is that of Oxamate amidohydrolase proenzyme from Klebsiella pneumoniae subsp. pneumoniae (strain ATCC 700721 / MGH 78578).